The chain runs to 324 residues: ATP synthase mitochondrial F1 complex assembly factor 1 (324 aa).

The N-terminal 54 residues, 1–54, are a transit peptide targeting the mitochondrion; it reads MAAVVSAAGGACPAVLQVAGLYRGLCAVRSRALGLGFVSPAQLRVFPVRRGSGL.

Belongs to the ATP11 family. As to quaternary structure, interacts with ATP5F1B; involved in the assembly of the F1 component of the mitochondrial ATP synthase (ATPase). Widely expressed but with low level.

The protein localises to the mitochondrion inner membrane. Functionally, has a complex stabilizing activity in the assembly of the mitochondrial F1-F0 complex. The chain is ATP synthase mitochondrial F1 complex assembly factor 1 from Mus musculus (Mouse).